Here is a 296-residue protein sequence, read N- to C-terminus: Cyclin-dependent kinase 1 (296 aa).

A Protein kinase domain is found at Tyr10–Phe288. Residues Leu16 to Val24 and Lys39 contribute to the ATP site. Thr20 bears the Phosphothreonine mark. The residue at position 21 (Tyr21) is a Phosphotyrosine. Asp129 acts as the Proton acceptor in catalysis. Thr162 carries the post-translational modification Phosphothreonine; by CAK.

Belongs to the protein kinase superfamily. CMGC Ser/Thr protein kinase family. CDC2/CDKX subfamily. As to quaternary structure, forms a stable but non-covalent complex with a regulatory subunit and with a cyclin.

The enzyme catalyses L-seryl-[protein] + ATP = O-phospho-L-seryl-[protein] + ADP + H(+). The catalysed reaction is L-threonyl-[protein] + ATP = O-phospho-L-threonyl-[protein] + ADP + H(+). It carries out the reaction [DNA-directed RNA polymerase] + ATP = phospho-[DNA-directed RNA polymerase] + ADP + H(+). With respect to regulation, phosphorylation at Thr-20 or Tyr-21 inactivates the enzyme, while phosphorylation at Thr-162 activates it. Functionally, plays a key role in the control of the eukaryotic cell cycle. Required for entry into S-phase and mitosis. p34 is a component of the kinase complex that phosphorylates the repetitive C-terminus of RNA polymerase II. In Dictyostelium discoideum (Social amoeba), this protein is Cyclin-dependent kinase 1 (cdk1).